A 137-amino-acid polypeptide reads, in one-letter code: 2-iminobutanoate/2-iminopropanoate deaminase (137 aa).

Serine 2 carries the N-acetylserine modification. 2 positions are modified to N6-succinyllysine: lysine 13 and lysine 67. Threonine 74 is modified (phosphothreonine). Residue serine 136 is modified to Phosphoserine.

Belongs to the RutC family. As to quaternary structure, homotrimer. Interacts with YTHDF2.

It is found in the cytoplasm. The protein localises to the nucleus. Its subcellular location is the peroxisome. The protein resides in the mitochondrion. The enzyme catalyses 2-iminobutanoate + H2O = 2-oxobutanoate + NH4(+). The catalysed reaction is 2-iminopropanoate + H2O = pyruvate + NH4(+). In terms of biological role, catalyzes the hydrolytic deamination of enamine/imine intermediates that form during the course of normal metabolism. May facilitate the release of ammonia from these potentially toxic reactive metabolites, reducing their impact on cellular components. It may act on enamine/imine intermediates formed by several types of pyridoxal-5'-phosphate-dependent dehydratases including L-threonine dehydratase. Its function is as follows. Also promotes endoribonucleolytic cleavage of some transcripts by promoting recruitment of the ribonuclease P/MRP complex. Acts by bridging YTHDF2 and the ribonuclease P/MRP complex. RIDA/HRSP12 binds to N6-methyladenosine (m6A)-containing mRNAs containing a 5'-GGUUC-3' motif: cooperative binding of RIDA/HRSP12 and YTHDF2 to such transcripts lead to recruitment of the ribonuclease P/MRP complex and subsequent endoribonucleolytic cleavage. This is 2-iminobutanoate/2-iminopropanoate deaminase from Bos taurus (Bovine).